The sequence spans 377 residues: Nitric oxide reductase FlRd-NAD(+) reductase (377 aa).

This sequence belongs to the FAD-dependent oxidoreductase family. It depends on FAD as a cofactor.

The protein resides in the cytoplasm. The enzyme catalyses 2 reduced [nitric oxide reductase rubredoxin domain] + NAD(+) + H(+) = 2 oxidized [nitric oxide reductase rubredoxin domain] + NADH. Its pathway is nitrogen metabolism; nitric oxide reduction. In terms of biological role, one of at least two accessory proteins for anaerobic nitric oxide (NO) reductase. Reduces the rubredoxin moiety of NO reductase. This chain is Nitric oxide reductase FlRd-NAD(+) reductase, found in Salmonella enteritidis PT4 (strain P125109).